We begin with the raw amino-acid sequence, 96 residues long: Co-chaperonin GroES (96 aa).

This sequence belongs to the GroES chaperonin family. As to quaternary structure, heptamer of 7 subunits arranged in a ring. Interacts with the chaperonin GroEL.

It is found in the cytoplasm. Functionally, together with the chaperonin GroEL, plays an essential role in assisting protein folding. The GroEL-GroES system forms a nano-cage that allows encapsulation of the non-native substrate proteins and provides a physical environment optimized to promote and accelerate protein folding. GroES binds to the apical surface of the GroEL ring, thereby capping the opening of the GroEL channel. The sequence is that of Co-chaperonin GroES from Chromohalobacter salexigens (strain ATCC BAA-138 / DSM 3043 / CIP 106854 / NCIMB 13768 / 1H11).